The sequence spans 389 residues: Succinate--CoA ligase [ADP-forming] subunit beta (389 aa).

The 236-residue stretch at 9 to 244 folds into the ATP-grasp domain; sequence KQLLAEYGIP…KTQEDPTEVI (236 aa). ATP-binding positions include Lys46, 53 to 55, Gly102, and Glu107; that span reads GRG. Mg(2+) is bound by residues Asn199 and Asp213. Substrate-binding positions include Asn264 and 321–323; that span reads GIV.

This sequence belongs to the succinate/malate CoA ligase beta subunit family. Heterotetramer of two alpha and two beta subunits. It depends on Mg(2+) as a cofactor.

The catalysed reaction is succinate + ATP + CoA = succinyl-CoA + ADP + phosphate. It catalyses the reaction GTP + succinate + CoA = succinyl-CoA + GDP + phosphate. It participates in carbohydrate metabolism; tricarboxylic acid cycle; succinate from succinyl-CoA (ligase route): step 1/1. In terms of biological role, succinyl-CoA synthetase functions in the citric acid cycle (TCA), coupling the hydrolysis of succinyl-CoA to the synthesis of either ATP or GTP and thus represents the only step of substrate-level phosphorylation in the TCA. The beta subunit provides nucleotide specificity of the enzyme and binds the substrate succinate, while the binding sites for coenzyme A and phosphate are found in the alpha subunit. The chain is Succinate--CoA ligase [ADP-forming] subunit beta from Stenotrophomonas maltophilia (strain R551-3).